A 275-amino-acid chain; its full sequence is NH(3)-dependent NAD(+) synthetase (275 aa).

Glycine 46–serine 53 is a binding site for ATP. Aspartate 52 is a binding site for Mg(2+). Residue arginine 140 participates in deamido-NAD(+) binding. Residue threonine 160 coordinates ATP. Glutamate 165 contributes to the Mg(2+) binding site. Residues lysine 173 and aspartate 180 each coordinate deamido-NAD(+). ATP is bound by residues lysine 189 and threonine 211. Histidine 260–lysine 261 lines the deamido-NAD(+) pocket.

This sequence belongs to the NAD synthetase family. As to quaternary structure, homodimer.

It carries out the reaction deamido-NAD(+) + NH4(+) + ATP = AMP + diphosphate + NAD(+) + H(+). It participates in cofactor biosynthesis; NAD(+) biosynthesis; NAD(+) from deamido-NAD(+) (ammonia route): step 1/1. Functionally, catalyzes the ATP-dependent amidation of deamido-NAD to form NAD. Uses ammonia as a nitrogen source. The sequence is that of NH(3)-dependent NAD(+) synthetase from Escherichia coli O45:K1 (strain S88 / ExPEC).